The primary structure comprises 344 residues: Holliday junction branch migration complex subunit RuvB (344 aa).

Residues 1 to 185 form a large ATPase domain (RuvB-L) region; that stretch reads MTERSDRDVS…FGFTAHMDFY (185 aa). ATP-binding positions include leucine 24, arginine 25, glycine 66, lysine 69, threonine 70, serine 71, 132–134, arginine 175, tyrosine 185, and arginine 222; that span reads EDF. Threonine 70 contacts Mg(2+). Positions 186-256 are small ATPAse domain (RuvB-S); sequence EPAELERVLA…VAKAALEVYD (71 aa). The head domain (RuvB-H) stretch occupies residues 259-344; it reads ELGLDRLDRA…VGASQPGLFE (86 aa). Residues arginine 314 and arginine 319 each coordinate DNA.

Belongs to the RuvB family. Homohexamer. Forms an RuvA(8)-RuvB(12)-Holliday junction (HJ) complex. HJ DNA is sandwiched between 2 RuvA tetramers; dsDNA enters through RuvA and exits via RuvB. An RuvB hexamer assembles on each DNA strand where it exits the tetramer. Each RuvB hexamer is contacted by two RuvA subunits (via domain III) on 2 adjacent RuvB subunits; this complex drives branch migration. In the full resolvosome a probable DNA-RuvA(4)-RuvB(12)-RuvC(2) complex forms which resolves the HJ.

The protein localises to the cytoplasm. It catalyses the reaction ATP + H2O = ADP + phosphate + H(+). In terms of biological role, the RuvA-RuvB-RuvC complex processes Holliday junction (HJ) DNA during genetic recombination and DNA repair, while the RuvA-RuvB complex plays an important role in the rescue of blocked DNA replication forks via replication fork reversal (RFR). RuvA specifically binds to HJ cruciform DNA, conferring on it an open structure. The RuvB hexamer acts as an ATP-dependent pump, pulling dsDNA into and through the RuvAB complex. RuvB forms 2 homohexamers on either side of HJ DNA bound by 1 or 2 RuvA tetramers; 4 subunits per hexamer contact DNA at a time. Coordinated motions by a converter formed by DNA-disengaged RuvB subunits stimulates ATP hydrolysis and nucleotide exchange. Immobilization of the converter enables RuvB to convert the ATP-contained energy into a lever motion, pulling 2 nucleotides of DNA out of the RuvA tetramer per ATP hydrolyzed, thus driving DNA branch migration. The RuvB motors rotate together with the DNA substrate, which together with the progressing nucleotide cycle form the mechanistic basis for DNA recombination by continuous HJ branch migration. Branch migration allows RuvC to scan DNA until it finds its consensus sequence, where it cleaves and resolves cruciform DNA. The sequence is that of Holliday junction branch migration complex subunit RuvB from Mycobacterium tuberculosis (strain ATCC 25177 / H37Ra).